We begin with the raw amino-acid sequence, 530 residues long: Ubiquitin carboxyl-terminal hydrolase 17 (530 aa).

The USP domain occupies 80–375 (AGLQNMGNTC…QAYVLFYIQK (296 aa)). C89 serves as the catalytic Nucleophile. H334 serves as the catalytic Proton acceptor. Composition is skewed to basic and acidic residues over residues 382–392 (SESVSRGREPR) and 398–413 (DTDRRATQGELKRDHP). Disordered stretches follow at residues 382-416 (SESVSRGREPRALGAEDTDRRATQGELKRDHPCLQ) and 490-530 (SSTT…LVCQ). Residues 399-530 (TDRRATQGEL…HSKRALLVCQ (132 aa)) form a mediates interaction with SUDS3 region. The segment covering 498–510 (ESVNTGTLASLQG) has biased composition (polar residues). Residues 511-524 (RTRRSKGKNKHSKR) are compositionally biased toward basic residues.

It belongs to the peptidase C19 family. USP17 subfamily. As to quaternary structure, interacts with SUDS3; the interaction is direct. In terms of tissue distribution, broadly expressed.

It localises to the nucleus. Its subcellular location is the endoplasmic reticulum. The catalysed reaction is Thiol-dependent hydrolysis of ester, thioester, amide, peptide and isopeptide bonds formed by the C-terminal Gly of ubiquitin (a 76-residue protein attached to proteins as an intracellular targeting signal).. Functionally, deubiquitinating enzyme that removes conjugated ubiquitin from specific proteins to regulate different cellular processes. Regulates cell proliferation by deubiquitinating and inhibiting RCE1 thereby controlling the small GTPases NRAS and HRAS localization and activation. In parallel, mediates deubiquitination of CDC25A, preventing CDC25A degradation by the proteasome during the G1/S and G2/M phases promoting cell-cycle progression. Also regulates cell proliferation and apoptosis through deubiquitination of SUDS3 a regulator of histone deacetylation. Through activation of the Rho family GTPases RAC1A, CDC42 and RHOA, regulates cell migration. Through the cleavage of 'Lys-48'- and 'Lys-63'-linked polyubiquitin chains of the cytoplasmic innate immune receptors RIGI and IFIH1 stimulates the cellular response to viral infection. In Homo sapiens (Human), this protein is Ubiquitin carboxyl-terminal hydrolase 17 (USP17L2).